We begin with the raw amino-acid sequence, 107 residues long: Pro-corazonin (107 aa).

The first 21 residues, 1–21, serve as a signal peptide directing secretion; it reads MVNSQILILFILSLTITIVMC. Position 22 is a pyrrolidone carboxylic acid (Gln22). Asn32 bears the Asparagine amide mark. Positions 88 to 107 are excised as a propeptide; the sequence is SFSENMINDHRQPAPTNNNY.

The protein belongs to the corazonin family. In terms of tissue distribution, in the adult brain, expressed in four neurons of the lateral protocerebrum project axons towards the retrocerebral complex.

It is found in the secreted. In terms of biological role, cardioactive peptide. Corazonin is probably involved in the physiological regulation of the heart beat. This chain is Pro-corazonin, found in Apis mellifera (Honeybee).